Here is a 256-residue protein sequence, read N- to C-terminus: Small ribosomal subunit protein uS2 (256 aa).

Belongs to the universal ribosomal protein uS2 family.

The protein is Small ribosomal subunit protein uS2 of Streptococcus equi subsp. equi (strain 4047).